The sequence spans 397 residues: Putative 8-amino-7-oxononanoate synthase (397 aa).

Position 22 (R22) interacts with substrate. Pyridoxal 5'-phosphate is bound at residue G109–W110. H139 contributes to the substrate binding site. Pyridoxal 5'-phosphate contacts are provided by residues S187, D212–H215, and T241–K244. K244 carries the post-translational modification N6-(pyridoxal phosphate)lysine. T358 contacts substrate.

It belongs to the class-II pyridoxal-phosphate-dependent aminotransferase family. BioF subfamily. As to quaternary structure, homodimer. The cofactor is pyridoxal 5'-phosphate.

The enzyme catalyses 6-carboxyhexanoyl-[ACP] + L-alanine + H(+) = (8S)-8-amino-7-oxononanoate + holo-[ACP] + CO2. It functions in the pathway cofactor biosynthesis; biotin biosynthesis. Its function is as follows. Catalyzes the decarboxylative condensation of pimeloyl-[acyl-carrier protein] and L-alanine to produce 8-amino-7-oxononanoate (AON), [acyl-carrier protein], and carbon dioxide. This chain is Putative 8-amino-7-oxononanoate synthase (bioF), found in Bordetella parapertussis (strain 12822 / ATCC BAA-587 / NCTC 13253).